Consider the following 274-residue polypeptide: Putative phosphoenolpyruvate synthase regulatory protein (274 aa).

Residue 155-162 coordinates ADP; the sequence is GVSRSGKT.

This sequence belongs to the pyruvate, phosphate/water dikinase regulatory protein family. PSRP subfamily.

It catalyses the reaction [pyruvate, water dikinase] + ADP = [pyruvate, water dikinase]-phosphate + AMP + H(+). The enzyme catalyses [pyruvate, water dikinase]-phosphate + phosphate + H(+) = [pyruvate, water dikinase] + diphosphate. Bifunctional serine/threonine kinase and phosphorylase involved in the regulation of the phosphoenolpyruvate synthase (PEPS) by catalyzing its phosphorylation/dephosphorylation. In Laribacter hongkongensis (strain HLHK9), this protein is Putative phosphoenolpyruvate synthase regulatory protein.